A 250-amino-acid polypeptide reads, in one-letter code: Proteasome subunit alpha (250 aa).

The protein belongs to the peptidase T1A family. As to quaternary structure, the 20S proteasome core is composed of 14 alpha and 14 beta subunits that assemble into four stacked heptameric rings, resulting in a barrel-shaped structure. The two inner rings, each composed of seven catalytic beta subunits, are sandwiched by two outer rings, each composed of seven alpha subunits. The catalytic chamber with the active sites is on the inside of the barrel. Has a gated structure, the ends of the cylinder being occluded by the N-termini of the alpha-subunits. Is capped by the proteasome-associated ATPase, ARC.

Its subcellular location is the cytoplasm. It participates in protein degradation; proteasomal Pup-dependent pathway. With respect to regulation, the formation of the proteasomal ATPase ARC-20S proteasome complex, likely via the docking of the C-termini of ARC into the intersubunit pockets in the alpha-rings, may trigger opening of the gate for substrate entry. Interconversion between the open-gate and close-gate conformations leads to a dynamic regulation of the 20S proteasome proteolysis activity. Functionally, component of the proteasome core, a large protease complex with broad specificity involved in protein degradation. In Mycobacterium sp. (strain JLS), this protein is Proteasome subunit alpha.